The following is a 291-amino-acid chain: Ubiquinone biosynthesis protein COQ4, mitochondrial (291 aa).

The transit peptide at 1-37 (MLGRRSVSLLRGLTELPVSSRAHTALRALSVPQTRRN) directs the protein to the mitochondrion. Zn(2+) is bound by residues His-169, Asp-170, His-173, and Glu-185. Residues 271–283 (PLNEAKEAAERRS) show a composition bias toward basic and acidic residues. Residues 271–291 (PLNEAKEAAERRSKTTQNQIY) are disordered.

This sequence belongs to the COQ4 family. In terms of assembly, component of a multi-subunit COQ enzyme complex, composed of at least COQ3, COQ4, COQ5, COQ6, COQ7 and COQ9. Zn(2+) is required as a cofactor.

The protein resides in the mitochondrion inner membrane. The enzyme catalyses a 4-hydroxy-3-methoxy-5-(all-trans-polyprenyl)benzoate + H(+) = a 2-methoxy-6-(all-trans-polyprenyl)phenol + CO2. Its pathway is cofactor biosynthesis; ubiquinone biosynthesis. In terms of biological role, lyase that catalyzes the C1-decarboxylation of 4-hydroxy-3-methoxy-5-(all-trans-polyprenyl)benzoic acid into 2-methoxy-6-(all-trans-polyprenyl)phenol during ubiquinone biosynthesis. This Coprinopsis cinerea (strain Okayama-7 / 130 / ATCC MYA-4618 / FGSC 9003) (Inky cap fungus) protein is Ubiquinone biosynthesis protein COQ4, mitochondrial.